A 392-amino-acid chain; its full sequence is ATP phosphoribosyltransferase regulatory subunit (392 aa).

The protein belongs to the class-II aminoacyl-tRNA synthetase family. HisZ subfamily. Heteromultimer composed of HisG and HisZ subunits.

It localises to the cytoplasm. It functions in the pathway amino-acid biosynthesis; L-histidine biosynthesis; L-histidine from 5-phospho-alpha-D-ribose 1-diphosphate: step 1/9. Functionally, required for the first step of histidine biosynthesis. May allow the feedback regulation of ATP phosphoribosyltransferase activity by histidine. This is ATP phosphoribosyltransferase regulatory subunit from Gloeobacter violaceus (strain ATCC 29082 / PCC 7421).